The following is a 320-amino-acid chain: Cytochrome f (320 aa).

An N-terminal signal peptide occupies residues 1-35; that stretch reads MQNRNTFSWVKEQMTRSIFVSMMIYIITRASISNA. Tyrosine 36, cysteine 56, cysteine 59, and histidine 60 together coordinate heme. The helical transmembrane segment at 286-306 threads the bilayer; the sequence is IQGLFLFLASVILAQIFLVLK.

The protein belongs to the cytochrome f family. In terms of assembly, the 4 large subunits of the cytochrome b6-f complex are cytochrome b6, subunit IV (17 kDa polypeptide, petD), cytochrome f and the Rieske protein, while the 4 small subunits are PetG, PetL, PetM and PetN. The complex functions as a dimer. Heme is required as a cofactor.

It is found in the plastid. Its subcellular location is the chloroplast thylakoid membrane. In terms of biological role, component of the cytochrome b6-f complex, which mediates electron transfer between photosystem II (PSII) and photosystem I (PSI), cyclic electron flow around PSI, and state transitions. The protein is Cytochrome f of Amborella trichopoda.